The chain runs to 95 residues: Small ribosomal subunit protein bS6 (95 aa).

The protein belongs to the bacterial ribosomal protein bS6 family. In terms of assembly, part of the 30S ribosomal subunit.

Its function is as follows. Binds together with bS18 to 16S ribosomal RNA. This Bacillus subtilis (strain 168) protein is Small ribosomal subunit protein bS6 (rpsF).